The primary structure comprises 254 residues: Bowman-Birk type bran trypsin inhibitor (254 aa).

Residues 1–22 (MSNTTMATSTILLFLLAGLAAA) form the signal peptide. A propeptide spanning residues 23–118 (HGDGDTTIRL…KCTAALDGLS (96 aa)) is cleaved from the precursor. Repeats lie at residues 46–120 (KPWD…LSME), 121–187 (RPWK…FCTP), and 188–251 (RPWG…CKPR). 9 disulfides stabilise this stretch: cysteine 125–cysteine 185, cysteine 126–cysteine 143, cysteine 152–cysteine 159, cysteine 156–cysteine 172, cysteine 193–cysteine 248, cysteine 194–cysteine 209, cysteine 199–cysteine 207, cysteine 216–cysteine 223, and cysteine 220–cysteine 236. The propeptide occupies 252-254 (AEN).

The protein belongs to the Bowman-Birk serine protease inhibitor family.

This is Bowman-Birk type bran trypsin inhibitor (RBBI3.3) from Oryza sativa subsp. japonica (Rice).